Reading from the N-terminus, the 281-residue chain is GDT1-like protein 4 (281 aa).

The signal sequence occupies residues 1-22; the sequence is MARRVSTTRLLLLLLLVAAAAA. Helical transmembrane passes span 66 to 86, 105 to 125, 137 to 157, 188 to 208, 226 to 246, and 258 to 278; these read AGLGLFDAFFASLSMILVSEI, TVLSGALSALVVMTILSTGLG, TNSAATVLYAFFGLRLLYIAW, IFSRFCTPIFLESFVLTFLAE, AVGVAVGATLGHTICTSFAVV, and GTVATIGGLLFLGFSLSSYFY.

Belongs to the GDT1 family.

It localises to the membrane. In Oryza sativa subsp. indica (Rice), this protein is GDT1-like protein 4.